We begin with the raw amino-acid sequence, 175 residues long: RNA pyrophosphohydrolase (175 aa).

A Nudix hydrolase domain is found at 6–150; that stretch reads GFRPNVGIVI…KREVYRRVMK (145 aa). The Nudix box signature appears at 38–59; it reads GGVDDGETPEQAMYRELYEEIG.

It belongs to the Nudix hydrolase family. RppH subfamily. A divalent metal cation is required as a cofactor.

Functionally, accelerates the degradation of transcripts by removing pyrophosphate from the 5'-end of triphosphorylated RNA, leading to a more labile monophosphorylated state that can stimulate subsequent ribonuclease cleavage. The polypeptide is RNA pyrophosphohydrolase (Aeromonas hydrophila subsp. hydrophila (strain ATCC 7966 / DSM 30187 / BCRC 13018 / CCUG 14551 / JCM 1027 / KCTC 2358 / NCIMB 9240 / NCTC 8049)).